Reading from the N-terminus, the 185-residue chain is Ribosome-recycling factor (185 aa).

Positions L142 to D161 are disordered.

The protein belongs to the RRF family.

It is found in the cytoplasm. In terms of biological role, responsible for the release of ribosomes from messenger RNA at the termination of protein biosynthesis. May increase the efficiency of translation by recycling ribosomes from one round of translation to another. The protein is Ribosome-recycling factor of Paenarthrobacter aurescens (strain TC1).